Reading from the N-terminus, the 454-residue chain is tRNA modification GTPase MnmE (454 aa).

(6S)-5-formyl-5,6,7,8-tetrahydrofolate is bound by residues Arg23, Glu80, and Lys120. The 162-residue stretch at 216–377 (GMKVVIAGRP…LRDHLKQSMG (162 aa)) folds into the TrmE-type G domain. Asn226 is a K(+) binding site. GTP is bound by residues 226 to 231 (NAGKSS), 245 to 251 (TDIAGTT), 270 to 273 (DTAG), 335 to 338 (NKAD), and 358 to 360 (SAR). Residue Ser230 participates in Mg(2+) binding. K(+)-binding residues include Thr245, Ile247, and Thr250. Residue Thr251 coordinates Mg(2+). Lys454 lines the (6S)-5-formyl-5,6,7,8-tetrahydrofolate pocket.

It belongs to the TRAFAC class TrmE-Era-EngA-EngB-Septin-like GTPase superfamily. TrmE GTPase family. As to quaternary structure, homodimer. Heterotetramer of two MnmE and two MnmG subunits. Requires K(+) as cofactor.

The protein resides in the cytoplasm. Exhibits a very high intrinsic GTPase hydrolysis rate. Involved in the addition of a carboxymethylaminomethyl (cmnm) group at the wobble position (U34) of certain tRNAs, forming tRNA-cmnm(5)s(2)U34. The protein is tRNA modification GTPase MnmE of Pectobacterium carotovorum subsp. carotovorum (strain PC1).